Here is a 460-residue protein sequence, read N- to C-terminus: Tubby-related protein 3 (460 aa).

Disordered stretches follow at residues K37–P132 and Y151–A193. Residues Y151–G162 show a composition bias toward acidic residues. The span at S166 to A188 shows a compositional bias: low complexity.

This sequence belongs to the TUB family. As to quaternary structure, associates with the IFT complex A (IFT-A). Interacts with SIRT1. Widely expressed including eyes and adipose depots.

It localises to the nucleus. The protein localises to the cell membrane. The protein resides in the cell projection. Its subcellular location is the cilium. It is found in the cytoplasm. It localises to the secreted. In terms of biological role, negative regulator of the Shh signaling transduction pathway: recruited to primary cilia via association with the IFT complex A (IFT-A) and is required for recruitment of G protein-coupled receptor GPR161 to cilia, a promoter of PKA-dependent basal repression machinery in Shh signaling. Binds to phosphorylated inositide (phosphoinositide) lipids. Both IFT-A- and phosphoinositide-binding properties are required to regulate ciliary G protein-coupled receptor trafficking. During adipogenesis, regulates ciliary trafficking of FFAR4 in preadipocytes. The sequence is that of Tubby-related protein 3 from Mus musculus (Mouse).